Consider the following 442-residue polypeptide: MDNQNGRISIALLPFLAHGHISPFFELAKQLAKRNCNVFLCSTPINLSSIKDKDSSASIKLVELHLPSSPDLPPHYHTTNGLPSHLMLPLRNAFETAGPTFSEILKTLNPDLLIYDFNPSWAPEIASSHNIPAVYFLTTAAASSSIGLHAFKNPGEKYPFPDFYDNSNITPEPPSADNMKLLHDFIACFERSCDIILIKSFRELEGKYIDLLSTLSDKTLVPVGPLVQDPMGHNEDPKTEQIINWLDKRAESTVVFVCFGSEYFLSNEELEEVAIGLEISTVNFIWAVRLIEGEKKGILPEGFVQRVGDRGLVVEGWAPQARILGHSSTGGFVSHCGWSSIAESMKFGVPVIAMARHLDQPLNGKLAAEVGVGMEVVRDENGKYKREGIAEVIRKVVVEKSGEVIRRKARELSEKMKEKGEQEIDRALEELVQICKKKKDEQ.

His20 serves as the catalytic Proton acceptor. His20 serves as a coordination point for an anthocyanidin. The Charge relay role is filled by Asp116. Residues Thr138, Ala318, Gln320, His335, Trp338, Ser340, Glu343, Asp359, and Gln360 each contribute to the UDP-alpha-D-glucose site.

The protein belongs to the UDP-glycosyltransferase family. In terms of tissue distribution, expressed at higher levels in roots than in leaves.

The catalysed reaction is (20S)-ginsenoside F2 + UDP-alpha-D-glucose = (20S)-ginsenoside Rd + UDP + H(+). It catalyses the reaction (20S)-ginsenoside Rh2 + UDP-alpha-D-glucose = (20S)-ginsenoside Rg3 + UDP + H(+). Its pathway is secondary metabolite biosynthesis; terpenoid biosynthesis. Functionally, component of the dammarane-type triterpene saponins (e.g. PPD-type ginsenosides or panaxosides) biosynthetic pathway. Glycosyltransferase that catalyzes the conversion of ginsenoside Rh2 to ginsenoside Rg3. Triggers the biosynthesis of ginsenoside Rd from ginsenoside F2. The chain is UDP-glucosyltransferase 29 from Panax ginseng (Korean ginseng).